The chain runs to 128 residues: Large ribosomal subunit protein bL12c (128 aa).

Residues 103–128 (QEGLGKDAAEDAKKQIEDAGGKVSLT) are disordered. A compositionally biased stretch (basic and acidic residues) spans 106–122 (LGKDAAEDAKKQIEDAG).

This sequence belongs to the bacterial ribosomal protein bL12 family. As to quaternary structure, homodimer. Part of the ribosomal stalk of the 50S ribosomal subunit. Forms a multimeric L10(L12)X complex, where L10 forms an elongated spine to which 2 to 4 L12 dimers bind in a sequential fashion. Binds GTP-bound translation factors.

The protein resides in the plastid. Its subcellular location is the chloroplast. Forms part of the ribosomal stalk which helps the ribosome interact with GTP-bound translation factors. Is thus essential for accurate translation. The sequence is that of Large ribosomal subunit protein bL12c from Thalassiosira pseudonana (Marine diatom).